The primary structure comprises 1018 residues: MSALCDPPGAPGPPGPAPATHGPAPLSAQELSQEIKAFLTGVDPILGHQLSAREHARCGLLLLRSLPPARAAVLDHLRGVFDESVRAHLAALEESPVAGPPHLRPPPPSHVPTGGPGLEDVVHEVQQVLCEFIRANPKAWAPVISAWSIDLMGQLSSTYSGQHQRVPHATGSLNELLQLWMGCRATRTLMDIYVQCLSALIGSCPDACVDALLDTSVQHSPHFDWVVAHIGSSFPGTIISRVLSCGLKDFCVHSGAGGGASACGNSSQPPSTDPFPGSPAIPGEKRVPKIASVVGILGHLASRHGDSIRRELLRMFHDSLAGGSGGRNGEPSLQATVPFLLQLAVMSPALLGTVSGELVDCLKPPAVLSQLQQHLQGFPREELDNMLNLAVHLVSQASGTGAYRLLQFLVDTAMPASVITTQGLAVPDTVREACDRLIQLLLLHLQKLVHHRGGSPGEGVLGPPPPPRPVPFLDALRNHVGELCGETLRLERKRFLWQHQLLGLLSVYTRPSCGPEALGHLLSRARSPEELSLATQLYAGLVVSLSGLLPLAFRSCLARVHAGTLQPPFTARFLRNLALLVGWEQQGGEGPSALGARFGESASAHLADLAPLLLHPEEEVAEAAASLLAICPFPSEALSPSQLLGLVRAGVHHFFSSLRLHGPPGVASASQLLTRLSQTSPAGLKAVLQLLVEGALHRGNTELFGGEMDGDNETLSIVSTPLASASLLDINRRHTAAVPGPGGIWSVFHAGVIGRGLKPPKIVQSRNHQEVIYNTQSLVSLLVHCCSASGNSEREGCWGAPTLSPEAAKAVAVTLVESVCPDAAGAELAWPPEDHARATVERDLRIGRRFREQPLLFELLKLVAAAPPALCYCSVLLRGLLAALLSHWEASRHPDTTHSPWHLEASCILVAVMAEGSLLPPALGNMHEVFSQLAPFEVRLLLLSVWGFLREHGPLPQKFIFQSERGRFIRDFAREGGAEGGPHLSVLHSVLHRNIDRLGLFSGRFQAPPPSTLLRQGT.

The tract at residues 1–26 (MSALCDPPGAPGPPGPAPATHGPAPL) is disordered. S2 carries the N-acetylserine modification. The segment covering 8–17 (PGAPGPPGPA) has biased composition (pro residues). Residue S278 is modified to Phosphoserine. 3 helical membrane-spanning segments follow: residues 533–553 (LATQLYAGLVVSLSGLLPLAF), 855–875 (LLFELLKLVAAAPPALCYCSV), and 929–949 (VFSQLAPFEVRLLLLSVWGFL).

Belongs to the Integrator subunit 5 family. In terms of assembly, component of the Integrator complex, composed of core subunits INTS1, INTS2, INTS3, INTS4, INTS5, INTS6, INTS7, INTS8, INTS9/RC74, INTS10, INTS11/CPSF3L, INTS12, INTS13, INTS14 and INTS15. The core complex associates with protein phosphatase 2A subunits PPP2CA and PPP2R1A, to form the Integrator-PP2A (INTAC) complex.

It is found in the nucleus. It localises to the cytoplasm. The protein resides in the nucleus membrane. Functionally, component of the integrator complex, a multiprotein complex that terminates RNA polymerase II (Pol II) transcription in the promoter-proximal region of genes. The integrator complex provides a quality checkpoint during transcription elongation by driving premature transcription termination of transcripts that are unfavorably configured for transcriptional elongation: the complex terminates transcription by (1) catalyzing dephosphorylation of the C-terminal domain (CTD) of Pol II subunit POLR2A/RPB1 and SUPT5H/SPT5, (2) degrading the exiting nascent RNA transcript via endonuclease activity and (3) promoting the release of Pol II from bound DNA. The integrator complex is also involved in terminating the synthesis of non-coding Pol II transcripts, such as enhancer RNAs (eRNAs), small nuclear RNAs (snRNAs), telomerase RNAs and long non-coding RNAs (lncRNAs). Mediates recruitment of cytoplasmic dynein to the nuclear envelope, probably as component of the integrator complex. The polypeptide is Integrator complex subunit 5 (Ints5) (Mus musculus (Mouse)).